Here is a 71-residue protein sequence, read N- to C-terminus: SGYSGAALDFPVAPSLAGHYSLTNCGQPSGASKCAEGTVPQAAFEKGTCYRELYASSCHHEETQIFQYPAV.

Positions 25 and 34 each coordinate phycourobilin. Cys49 contacts (2R,3E)-phycoerythrobilin. Residue Cys58 coordinates phycourobilin.

In terms of assembly, heteromer of 6 alpha, 6 beta and 1 gamma chains. In terms of processing, contains four covalently linked bilin chromophores.

It localises to the plastid. It is found in the chloroplast thylakoid membrane. Its function is as follows. Critical for the incorporation of phycoerythrin in the phycobilisome complex. The protein is R-phycoerythrin gamma-1 chain, chloroplastic of Gastroclonium coulteri (Red alga).